A 343-amino-acid chain; its full sequence is 4-hydroxyproline 2-epimerase 1 (343 aa).

S90 serves as the catalytic Proton acceptor. Substrate contacts are provided by residues 91–92 (GS), D251, and 256–257 (GT).

This sequence belongs to the proline racemase family.

It carries out the reaction trans-4-hydroxy-L-proline = cis-4-hydroxy-D-proline. Its function is as follows. Catalyzes the epimerization of trans-4-hydroxy-L-proline (t4LHyp) to cis-4-hydroxy-D-proline (c4DHyp) in vitro, albeit with low efficiency. The physiological substrate may be different. Displays no proline racemase activity. This is 4-hydroxyproline 2-epimerase 1 from Brucella anthropi (strain ATCC 49188 / DSM 6882 / CCUG 24695 / JCM 21032 / LMG 3331 / NBRC 15819 / NCTC 12168 / Alc 37) (Ochrobactrum anthropi).